We begin with the raw amino-acid sequence, 551 residues long: MFS efflux transporter aclA (551 aa).

A run of 8 helical transmembrane segments spans residues 26-46 (WAVF…ITAI), 64-84 (VWIA…IGQI), 93-113 (PMII…GATS), 125-145 (GLGA…LVPL), 154-174 (IALS…GALV), 181-201 (WVFY…VLCL), 220-240 (WVGN…LVIG), and 251-271 (VLVP…FEAS). N-linked (GlcNAc...) asparagine glycosylation occurs at asparagine 286. A run of 6 helical transmembrane segments spans residues 294–314 (VLAF…TLFF), 327–347 (VDVI…GAIM), 356–376 (LHWA…TWDA), 385–405 (ILQC…LPAI), 420–440 (AYAF…AVVF), and 492–512 (LRTV…LVVV).

The protein belongs to the major facilitator superfamily.

The protein localises to the membrane. In terms of biological role, MFS efflux transporter; part of the gene cluster that mediates the biosynthesis of aspirochlorine (or antibiotic A30641), an unusual halogenated spiro compound with distinctive antifungal properties due to selective inhibition of protein biosynthesis, and which is also active against bacteria, viruses, and murine tumor cells. This chain is MFS efflux transporter aclA, found in Aspergillus oryzae (strain ATCC 42149 / RIB 40) (Yellow koji mold).